Here is a 212-residue protein sequence, read N- to C-terminus: Protein G1-like7 (212 aa).

Low complexity predominate over residues 1-22 (MDPSGPGPSSAAAGGAPAVAAA). Disordered regions lie at residues 1–34 (MDPSGPGPSSAAAGGAPAVAAAPQPPAQLSRYES) and 148–212 (KARG…PSAS). The ALOG domain maps to 31–158 (RYESQKRRDW…ARGIPYEKKK (128 aa)). The short motif at 156-160 (KKKRK) is the Nuclear localization signal element. Over residues 167–182 (PAGVEPSGSSSAAAAA) the composition is skewed to low complexity. Residues 183–194 (AGGGDAGSGGGA) are compositionally biased toward gly residues. Residues 195-212 (AATTTAQPGGSGTAPSAS) show a composition bias toward low complexity.

This sequence belongs to the plant homeotic and developmental regulators ALOG protein family.

The protein resides in the nucleus. Probable transcription regulator that acts as a developmental regulator by promoting cell growth in response to light. This is Protein G1-like7 (G1L7) from Oryza sativa subsp. japonica (Rice).